The following is a 27-amino-acid chain: Potassium channel toxin alpha-KTx 32.1 (27 aa).

2 disulfide bridges follow: Cys5/Cys18 and Cys12/Cys25.

As to expression, expressed by the venom gland.

The protein localises to the secreted. Functionally, blocker of voltage-gated potassium channels. Inhibits voltage-gated potassium channels Kv1.2/KCNA2 (Kd=0.96 nM) and Kv1.3/KCNA3 (Kd=1.3 nM). Does not inhibit Kv1.1/KCNA1, Kv1.5/KCNA5, Kv11.1/KCNH2/ERG1, KCa1.1/KCNMA1, KCa3.1/KCNN4, NaV1.5/SCN5A, NaV1.4/SCN4A or HV1/HVCN1. Strongly inhibits the expression of the activation markers interleukin-2 receptor and CD40 ligand/CD40LG in anti-CD3-activated CD4(+) TEM lymphocytes. In Centruroides margaritatus (Central American bark Scorpion), this protein is Potassium channel toxin alpha-KTx 32.1.